Reading from the N-terminus, the 204-residue chain is Large ribosomal subunit protein uL22c (204 aa).

It belongs to the universal ribosomal protein uL22 family. As to quaternary structure, part of the 50S ribosomal subunit.

The protein localises to the plastid. It is found in the chloroplast. This protein binds specifically to 23S rRNA. Its function is as follows. The globular domain of the protein is located near the polypeptide exit tunnel on the outside of the subunit, while an extended beta-hairpin is found that lines the wall of the exit tunnel in the center of the 70S ribosome. This Pisum sativum (Garden pea) protein is Large ribosomal subunit protein uL22c (rpl22).